A 559-amino-acid polypeptide reads, in one-letter code: Urocanate hydratase (559 aa).

NAD(+) is bound by residues 54 to 55 (GG), Gln132, 178 to 180 (GMG), Glu198, Arg203, 244 to 245 (NA), 265 to 269 (QTSAH), 275 to 276 (YL), and Tyr324. Cys412 is an active-site residue. Gly494 lines the NAD(+) pocket.

It belongs to the urocanase family. Requires NAD(+) as cofactor.

The protein resides in the cytoplasm. It catalyses the reaction 4-imidazolone-5-propanoate = trans-urocanate + H2O. Its pathway is amino-acid degradation; L-histidine degradation into L-glutamate; N-formimidoyl-L-glutamate from L-histidine: step 2/3. Its function is as follows. Catalyzes the conversion of urocanate to 4-imidazolone-5-propionate. The chain is Urocanate hydratase from Photorhabdus laumondii subsp. laumondii (strain DSM 15139 / CIP 105565 / TT01) (Photorhabdus luminescens subsp. laumondii).